The following is a 266-amino-acid chain: Thymidylate synthase (266 aa).

Residues Arg-20 and 129 to 130 (RR) each bind dUMP. The active-site Nucleophile is the Cys-149. Residues 169-172 (RSCD), Asn-180, and 210-212 (HVY) contribute to the dUMP site. Asp-172 provides a ligand contact to (6R)-5,10-methylene-5,6,7,8-tetrahydrofolate. Ala-265 contributes to the (6R)-5,10-methylene-5,6,7,8-tetrahydrofolate binding site.

This sequence belongs to the thymidylate synthase family. Bacterial-type ThyA subfamily. In terms of assembly, homodimer.

It localises to the cytoplasm. It carries out the reaction dUMP + (6R)-5,10-methylene-5,6,7,8-tetrahydrofolate = 7,8-dihydrofolate + dTMP. It participates in pyrimidine metabolism; dTTP biosynthesis. Catalyzes the reductive methylation of 2'-deoxyuridine-5'-monophosphate (dUMP) to 2'-deoxythymidine-5'-monophosphate (dTMP) while utilizing 5,10-methylenetetrahydrofolate (mTHF) as the methyl donor and reductant in the reaction, yielding dihydrofolate (DHF) as a by-product. This enzymatic reaction provides an intracellular de novo source of dTMP, an essential precursor for DNA biosynthesis. The sequence is that of Thymidylate synthase from Bifidobacterium longum (strain NCC 2705).